The chain runs to 304 residues: Killer cell immunoglobulin-like receptor 2DS4 (304 aa).

Positions 1 to 21 (MSLMVIIMACVGFFLLQGAWP) are cleaved as a signal peptide. At 22–245 (QEGVHRKPSF…SKTGNPRHLH (224 aa)) the chain is on the extracellular side. 2 Ig-like C2-type domains span residues 42–107 (EETV…VPHS) and 142–205 (GENV…FRDA). Cysteine 49 and cysteine 100 are joined by a disulfide. Asparagine 67, asparagine 84, asparagine 144, asparagine 178, and asparagine 211 each carry an N-linked (GlcNAc...) asparagine glycan. Residues cysteine 149 and cysteine 198 are joined by a disulfide bond. The disordered stretch occupies residues 220-239 (VTGNPSNSWPSPTEPSSKTG). The chain crosses the membrane as a helical span at residues 246–265 (VLIGTSVVKIPFTILLFFLL). Topologically, residues 266 to 304 (HRWCSDKKNAAVMDQEPAGNRTVNSEDSDEQDHQEVSYA) are cytoplasmic. A disordered region spans residues 280-304 (QEPAGNRTVNSEDSDEQDHQEVSYA).

It belongs to the immunoglobulin superfamily. Interacts with HLA-F; this interaction is direct.

The protein localises to the cell membrane. In terms of biological role, receptor on natural killer (NK) cells for HLA-C alleles. Does not inhibit the activity of NK cells. The sequence is that of Killer cell immunoglobulin-like receptor 2DS4 from Homo sapiens (Human).